Here is a 531-residue protein sequence, read N- to C-terminus: Na(+)/H(+) antiporter NhaB (531 aa).

A run of 11 helical transmembrane segments spans residues 23–45 (IAIL…VAGW), 66–86 (PGGL…SQVL), 97–117 (LLLI…LFVF), 130–164 (VSLM…FYSI), 206–226 (LLMH…VGEP), 244–264 (LRMG…CFLV), 307–327 (AFVG…VGLI), 352–372 (EEAL…GVII), 393–413 (LVIF…VFVG), 451–471 (ATPN…APLI), and 478–498 (MVWM…LAIE).

The protein belongs to the NhaB Na(+)/H(+) (TC 2.A.34) antiporter family.

It is found in the cell inner membrane. The catalysed reaction is 2 Na(+)(in) + 3 H(+)(out) = 2 Na(+)(out) + 3 H(+)(in). Functionally, na(+)/H(+) antiporter that extrudes sodium in exchange for external protons. The sequence is that of Na(+)/H(+) antiporter NhaB from Shewanella loihica (strain ATCC BAA-1088 / PV-4).